We begin with the raw amino-acid sequence, 220 residues long: Deoxyribose-phosphate aldolase 1 (220 aa).

Residue Asp89 is the Proton donor/acceptor of the active site. Lys151 acts as the Schiff-base intermediate with acetaldehyde in catalysis. Residue Lys180 is the Proton donor/acceptor of the active site.

The protein belongs to the DeoC/FbaB aldolase family. DeoC type 1 subfamily.

It localises to the cytoplasm. It catalyses the reaction 2-deoxy-D-ribose 5-phosphate = D-glyceraldehyde 3-phosphate + acetaldehyde. Its pathway is carbohydrate degradation; 2-deoxy-D-ribose 1-phosphate degradation; D-glyceraldehyde 3-phosphate and acetaldehyde from 2-deoxy-alpha-D-ribose 1-phosphate: step 2/2. Functionally, catalyzes a reversible aldol reaction between acetaldehyde and D-glyceraldehyde 3-phosphate to generate 2-deoxy-D-ribose 5-phosphate. The polypeptide is Deoxyribose-phosphate aldolase 1 (Staphylococcus aureus (strain MRSA252)).